The chain runs to 298 residues: Cyclin-dependent kinase 2 (298 aa).

The 283-residue stretch at 4 to 286 folds into the Protein kinase domain; it reads FQKVEKIGEG…AKNALVHRFF (283 aa). Residues 10-18, K33, 81-83, and D86 each bind ATP; these read IGEGTYGVV and EFL. Phosphothreonine is present on T14. Residue Y15 is modified to Phosphotyrosine. Residue D127 is the Proton acceptor of the active site. ATP contacts are provided by residues 129–132 and D145; that span reads KPQN. Residue T160 is modified to Phosphothreonine; by CAK.

It belongs to the protein kinase superfamily. CMGC Ser/Thr protein kinase family. CDC2/CDKX subfamily.

It catalyses the reaction L-seryl-[protein] + ATP = O-phospho-L-seryl-[protein] + ADP + H(+). The catalysed reaction is L-threonyl-[protein] + ATP = O-phospho-L-threonyl-[protein] + ADP + H(+). Its activity is regulated as follows. Phosphorylation at Thr-14 or Tyr-15 inactivates the enzyme, while phosphorylation at Thr-160 activates it. In terms of biological role, serine/threonine-protein kinase involved in the control of the cell cycle; essential for meiosis, but dispensable for mitosis. Triggers duplication of centrosomes and DNA. Acts at the G1-S transition to promote the E2F transcriptional program and the initiation of DNA synthesis, and modulates G2 progression; controls the timing of entry into mitosis/meiosis by controlling the subsequent activation of cyclin B/CDK1 by phosphorylation, and coordinates the activation of cyclin B/CDK1 at the centrosome and in the nucleus. Crucial role in orchestrating a fine balance between cellular proliferation, cell death, and DNA repair in embryonic stem cells (ESCs). Activity of CDK2 is maximal during S phase and G2; activated by interaction with cyclin E during the early stages of DNA synthesis to permit G1-S transition, and subsequently activated by cyclin A2 (cyclin A1 in germ cells) during the late stages of DNA replication to drive the transition from S phase to mitosis, the G2 phase. The sequence is that of Cyclin-dependent kinase 2 (cdk2) from Carassius auratus (Goldfish).